Reading from the N-terminus, the 7311-residue chain is MAM and LDL-receptor class A domain-containing protein 2 (7311 aa).

16 consecutive MAM domains span residues alanine 4–threonine 171, leucine 199–proline 361, lysine 363–proline 530, glycine 532–valine 695, tyrosine 727–valine 887, methionine 889–leucine 1050, glycine 1052–leucine 1220, phenylalanine 1228–serine 1392, glycine 1394–alanine 1557, glycine 1559–glutamine 1722, asparagine 1755–serine 1918, threonine 1920–leucine 2087, glycine 2089–valine 2254, asparagine 2274–proline 2437, threonine 2439–proline 2601, and glycine 2603–glycine 2771. Positions tryptophan 2461–threonine 2481 are disordered. Over residues glycine 2466–proline 2475 the composition is skewed to low complexity. P-type domains follow at residues glycine 2771–proline 2817 and serine 2818–proline 2862. 6 disulfides stabilise this stretch: cysteine 2773–cysteine 2802, cysteine 2784–cysteine 2801, cysteine 2795–cysteine 2813, cysteine 2820–cysteine 2847, cysteine 2831–cysteine 2846, and cysteine 2841–cysteine 2858. MAM domains lie at tryptophan 2883–proline 3048, arginine 3050–proline 3214, glycine 3216–serine 3384, and glycine 3429–leucine 3587. In terms of domain architecture, LDL-receptor class A 1 spans serine 3593–tyrosine 3628. 3 disulfides stabilise this stretch: cysteine 3594–cysteine 3605, cysteine 3600–cysteine 3618, and cysteine 3612–cysteine 3627. The MAM 21 domain occupies tyrosine 3632–serine 3794. LDL-receptor class A domains are found at residues proline 3814–glycine 3850 and serine 4016–alanine 4054. 3 cysteine pairs are disulfide-bonded: cysteine 3815–cysteine 3827, cysteine 3822–cysteine 3840, and cysteine 3834–cysteine 3849. The MAM 22 domain maps to glycine 3850–leucine 4011. Cystine bridges form between cysteine 4017/cysteine 4029, cysteine 4024/cysteine 4042, and cysteine 4036/cysteine 4053. An MAM 23 domain is found at glutamate 4058–proline 4221. In terms of domain architecture, LDL-receptor class A 4 spans glycine 4239–proline 4276. 3 disulfide bridges follow: cysteine 4240–cysteine 4253, cysteine 4247–cysteine 4266, and cysteine 4260–cysteine 4275. The MAM 24 domain maps to alanine 4277–glutamate 4438. The 40-residue stretch at threonine 4444–alanine 4483 folds into the LDL-receptor class A 5 domain. 3 disulfide bridges follow: cysteine 4445-cysteine 4458, cysteine 4453-cysteine 4471, and cysteine 4465-cysteine 4482. Residues asparagine 4486–valine 4646 enclose the MAM 25 domain. 2 LDL-receptor class A domains span residues proline 4660 to glycine 4699 and tyrosine 4859 to serine 4899. Disulfide bonds link cysteine 4668–cysteine 4687, cysteine 4681–cysteine 4698, cysteine 4860–cysteine 4876, cysteine 4871–cysteine 4889, and cysteine 4883–cysteine 4898. Residues tryptophan 4700–glycine 4862 enclose the MAM 26 domain. In terms of domain architecture, MAM 27 spans serine 4903–glutamine 5063. The LDL-receptor class A 8 domain occupies asparagine 5085–proline 5122. 3 disulfides stabilise this stretch: cysteine 5086/cysteine 5099, cysteine 5093/cysteine 5112, and cysteine 5106/cysteine 5121. Positions histidine 5123 to leucine 5281 constitute an MAM 28 domain. The LDL-receptor class A 9 domain occupies serine 5287 to glycine 5322. 3 disulfides stabilise this stretch: cysteine 5288-cysteine 5299, cysteine 5294-cysteine 5312, and cysteine 5306-cysteine 5321. Residues threonine 5326–glutamine 5489 form the MAM 29 domain. The LDL-receptor class A 10 domain occupies glutamine 5513–alanine 5552. 3 cysteine pairs are disulfide-bonded: cysteine 5514–cysteine 5529, cysteine 5521–cysteine 5542, and cysteine 5536–cysteine 5551. The region spanning threonine 5554 to proline 5719 is the MAM 30 domain. The region spanning lysine 5725 to serine 5763 is the LDL-receptor class A 11 domain. 3 cysteine pairs are disulfide-bonded: cysteine 5726–cysteine 5738, cysteine 5733–cysteine 5751, and cysteine 5745–cysteine 5762. The MAM 31 domain maps to glycine 5768–aspartate 5935. The 37-residue stretch at proline 5957–glycine 5993 folds into the LDL-receptor class A 12 domain. Disulfide bonds link cysteine 5958–cysteine 5970, cysteine 5965–cysteine 5983, and cysteine 5977–cysteine 5992. Residues serine 5994 to valine 6156 form the MAM 32 domain. The interval asparagine 6014–aspartate 6034 is disordered. Positions lysine 6023–aspartate 6034 are enriched in polar residues. The LDL-receptor class A 13 domain occupies threonine 6161–serine 6200. Cystine bridges form between cysteine 6162–cysteine 6175, cysteine 6169–cysteine 6188, and cysteine 6182–cysteine 6199. One can recognise an MAM 33 domain in the interval alanine 6204–lysine 6365. An LDL-receptor class A 14 domain is found at arginine 6377–proline 6414. 3 cysteine pairs are disulfide-bonded: cysteine 6378-cysteine 6391, cysteine 6385-cysteine 6404, and cysteine 6398-cysteine 6413. MAM domains follow at residues alanine 6430–lysine 6590, leucine 6606–phenylalanine 6779, glycine 6808–phenylalanine 6965, and glycine 7173–leucine 7311.

As to expression, component of the acid-insoluble and acid-soluble organic matrix of the aragonitic skeleton (at protein level).

It is found in the secreted. This Acropora millepora (Staghorn coral) protein is MAM and LDL-receptor class A domain-containing protein 2.